The primary structure comprises 425 residues: UDP-N-acetylglucosamine 1-carboxyvinyltransferase (425 aa).

Lysine 31–asparagine 32 lines the phosphoenolpyruvate pocket. Arginine 100 serves as a coordination point for UDP-N-acetyl-alpha-D-glucosamine. Cysteine 124 acts as the Proton donor in catalysis. A 2-(S-cysteinyl)pyruvic acid O-phosphothioketal modification is found at cysteine 124. UDP-N-acetyl-alpha-D-glucosamine is bound by residues arginine 129–glutamine 133, threonine 170–threonine 172, aspartate 311, and isoleucine 333.

It belongs to the EPSP synthase family. MurA subfamily.

It localises to the cytoplasm. The catalysed reaction is phosphoenolpyruvate + UDP-N-acetyl-alpha-D-glucosamine = UDP-N-acetyl-3-O-(1-carboxyvinyl)-alpha-D-glucosamine + phosphate. Its pathway is cell wall biogenesis; peptidoglycan biosynthesis. Functionally, cell wall formation. Adds enolpyruvyl to UDP-N-acetylglucosamine. The chain is UDP-N-acetylglucosamine 1-carboxyvinyltransferase from Aquifex aeolicus (strain VF5).